The primary structure comprises 758 residues: 5-methyltetrahydropteroyltriglutamate--homocysteine methyltransferase (758 aa).

Residues 15 to 18 (RELK) and K114 each bind 5-methyltetrahydropteroyltri-L-glutamate. L-homocysteine-binding positions include 433 to 435 (IGS) and E486. L-methionine is bound by residues 433–435 (IGS) and E486. Residues 517–518 (RC) and W563 each bind 5-methyltetrahydropteroyltri-L-glutamate. D601 provides a ligand contact to L-homocysteine. Residue D601 participates in L-methionine binding. Position 607 (E607) interacts with 5-methyltetrahydropteroyltri-L-glutamate. Zn(2+) is bound by residues H643, C645, and E667. H696 acts as the Proton donor in catalysis. C728 contacts Zn(2+).

It belongs to the vitamin-B12 independent methionine synthase family. Zn(2+) is required as a cofactor.

The enzyme catalyses 5-methyltetrahydropteroyltri-L-glutamate + L-homocysteine = tetrahydropteroyltri-L-glutamate + L-methionine. It participates in amino-acid biosynthesis; L-methionine biosynthesis via de novo pathway; L-methionine from L-homocysteine (MetE route): step 1/1. In terms of biological role, catalyzes the transfer of a methyl group from 5-methyltetrahydrofolate to homocysteine resulting in methionine formation. This chain is 5-methyltetrahydropteroyltriglutamate--homocysteine methyltransferase, found in Syntrophotalea carbinolica (strain DSM 2380 / NBRC 103641 / GraBd1) (Pelobacter carbinolicus).